A 189-amino-acid chain; its full sequence is dCTP deaminase, dUMP-forming (189 aa).

DCTP-binding positions include 101–106 (KSSLGR), D119, 127–129 (TLE), Q148, Y162, and Q174. E129 (proton donor/acceptor) is an active-site residue. The segment at 163–189 (GSSEAGSKYQGQRGPTPSKAYLNFNRS) is disordered.

It belongs to the dCTP deaminase family. In terms of assembly, homotrimer.

It catalyses the reaction dCTP + 2 H2O = dUMP + NH4(+) + diphosphate. It participates in pyrimidine metabolism; dUMP biosynthesis; dUMP from dCTP: step 1/1. Bifunctional enzyme that catalyzes both the deamination of dCTP to dUTP and the hydrolysis of dUTP to dUMP without releasing the toxic dUTP intermediate. The sequence is that of dCTP deaminase, dUMP-forming from Rhodococcus erythropolis (strain PR4 / NBRC 100887).